A 520-amino-acid chain; its full sequence is Hydroxymethylglutaryl-CoA synthase, cytoplasmic (520 aa).

The residue at position 4 (Ser4) is a Phosphoserine. (3S)-3-hydroxy-3-methylglutaryl-CoA is bound by residues Asp43 and Ala44. 44–46 (AGK) serves as a coordination point for CoA. Lys46 is subject to N6-acetyllysine. Glu95 functions as the Proton donor/acceptor in the catalytic mechanism. (3S)-3-hydroxy-3-methylglutaryl-CoA-binding residues include Cys129, Asn167, Thr171, Ser221, and His264. Residue Cys129 is the Acyl-thioester intermediate of the active site. Asn167 is a binding site for CoA. Ser221 is a binding site for CoA. His264 acts as the Proton donor/acceptor in catalysis. Lys269 and Lys273 together coordinate CoA. The (3S)-3-hydroxy-3-methylglutaryl-CoA site is built by Lys273, Asn343, and Ser377. At Lys273 the chain carries N6-acetyllysine. The tract at residues 487-520 (NTATEHIPSPAKKVPRLPATSGEPESAVISNGEH) is disordered. Ser495 and Ser516 each carry phosphoserine.

It belongs to the thiolase-like superfamily. HMG-CoA synthase family. In terms of assembly, homodimer.

It localises to the cytoplasm. It catalyses the reaction acetoacetyl-CoA + acetyl-CoA + H2O = (3S)-3-hydroxy-3-methylglutaryl-CoA + CoA + H(+). It functions in the pathway metabolic intermediate biosynthesis; (R)-mevalonate biosynthesis; (R)-mevalonate from acetyl-CoA: step 2/3. Functionally, catalyzes the condensation of acetyl-CoA with acetoacetyl-CoA to form HMG-CoA, which is converted by HMG-CoA reductase (HMGCR) into mevalonate, a precursor for cholesterol synthesis. This chain is Hydroxymethylglutaryl-CoA synthase, cytoplasmic, found in Rattus norvegicus (Rat).